Reading from the N-terminus, the 345-residue chain is Cell division control protein 2 homolog 2 (345 aa).

A disordered region spans residues 1-44 (MQVQVQEGQTACDGSLRPLPSAGPASFVPRSLRPAPLRGTSTPD). Residues 46-328 (YSRIEKVGEG…AYEALQHSYF (283 aa)) enclose the Protein kinase domain. ATP is bound by residues 52–60 (VGEGSYGIV) and K75. S56 carries the post-translational modification Phosphoserine. At Y57 the chain carries Phosphotyrosine. The Proton acceptor role is filled by D168.

Belongs to the protein kinase superfamily. CMGC Ser/Thr protein kinase family. CDC2/CDKX subfamily. As to quaternary structure, forms a stable but non-covalent complex with a regulatory subunit and with a cyclin.

The catalysed reaction is L-seryl-[protein] + ATP = O-phospho-L-seryl-[protein] + ADP + H(+). It carries out the reaction L-threonyl-[protein] + ATP = O-phospho-L-threonyl-[protein] + ADP + H(+). Phosphorylation at Ser-56 or Tyr-57 inactivates the enzyme. Its function is as follows. Probably involved in the control of the cell cycle. The chain is Cell division control protein 2 homolog 2 (CRK2) from Trypanosoma brucei brucei.